We begin with the raw amino-acid sequence, 305 residues long: Protoheme IX farnesyltransferase (305 aa).

Transmembrane regions (helical) follow at residues 29–49, 55–75, 101–121, 123–143, 151–171, 177–197, 219–241, 246–268, and 283–303; these read LIVF…PGLA, LWAT…NCLI, ALIF…EAVN, LTAW…TVVL, IVIG…AMTG, GLIL…ALAL, FTRL…PFVQ, WLYL…RLWR, and IWHL…QDLL.

Belongs to the UbiA prenyltransferase family. Protoheme IX farnesyltransferase subfamily.

The protein localises to the cell inner membrane. It carries out the reaction heme b + (2E,6E)-farnesyl diphosphate + H2O = Fe(II)-heme o + diphosphate. It functions in the pathway porphyrin-containing compound metabolism; heme O biosynthesis; heme O from protoheme: step 1/1. In terms of biological role, converts heme B (protoheme IX) to heme O by substitution of the vinyl group on carbon 2 of heme B porphyrin ring with a hydroxyethyl farnesyl side group. The sequence is that of Protoheme IX farnesyltransferase from Leptothrix cholodnii (strain ATCC 51168 / LMG 8142 / SP-6) (Leptothrix discophora (strain SP-6)).